The following is a 430-amino-acid chain: Pre-B-cell leukemia transcription factor 2 (430 aa).

Positions 1–52 (MDERLLGPPPPGGGRGGLGLVGAEPGGPGEPPGGGDPGGGSGGVPGGRGKQD) are disordered. Residues 13–48 (GGRGGLGLVGAEPGGPGEPPGGGDPGGGSGGVPGGR) show a composition bias toward gly residues. The PBC domain occupies 48–243 (RGKQDIGDIL…VMILRSRFLD (196 aa)). A PBC-A region spans residues 55 to 134 (DILQQIMTIT…EGVAGPEKGG (80 aa)). Residues S136, S151, and S159 each carry the phosphoserine modification. The tract at residues 137 to 243 (AAAAAAAAAS…VMILRSRFLD (107 aa)) is PBC-B. Positions 244–306 (ARRKRRNFSK…NKRIRYKKNI (63 aa)) form a DNA-binding region, homeobox; TALE-type. 2 disordered regions span residues 327 to 347 (GGHSRTSSPTPPSSAGSGGSF) and 375 to 430 (LRHS…DTSN). A phosphoserine mark is found at S330 and S395. Residues 409 to 418 (VTPSSVTSPT) are compositionally biased toward polar residues.

The protein belongs to the TALE/PBX homeobox family. Forms heterodimers with MEIS1 and heterotrimers with MEIS1 and HOXA9. Interacts with PBXIP1.

It localises to the nucleus. Functionally, transcriptional activator that binds the sequence 5'-ATCAATCAA-3'. Activates transcription of PF4 in complex with MEIS1. This chain is Pre-B-cell leukemia transcription factor 2 (Pbx2), found in Mus musculus (Mouse).